The sequence spans 451 residues: BAHD acyltransferase At3g29680 (451 aa).

Active-site proton acceptor residues include histidine 161 and aspartate 393.

It belongs to the plant acyltransferase family.

This is BAHD acyltransferase At3g29680 from Arabidopsis thaliana (Mouse-ear cress).